We begin with the raw amino-acid sequence, 594 residues long: (-)-endo-fenchol synthase, chloroplastic (594 aa).

A chloroplast-targeting transit peptide spans 1–50 (MSSLVMHVGIVNKPAITYLPTLSRSASNLHNVSSTRLQTSCSLQLDYKPV). Asp-348, Asp-352, Asp-492, and Glu-500 together coordinate Mg(2+). The DDXXD motif motif lies at 348–352 (DDIYD).

Belongs to the terpene synthase family. Tpsa subfamily. Mg(2+) is required as a cofactor. Requires Mn(2+) as cofactor. As to expression, expressed at high levels in leaves.

Its subcellular location is the plastid. The protein resides in the chloroplast. It carries out the reaction (2E)-geranyl diphosphate = alpha-pinene + diphosphate. The catalysed reaction is (2E)-geranyl diphosphate + H2O = (1S,2S,4R)-endo-fenchol + diphosphate. It catalyses the reaction (2E)-geranyl diphosphate = limonene + diphosphate. It participates in secondary metabolite biosynthesis; terpenoid biosynthesis. Monoterpene synthase involved in the biosynthesis of volatile compounds widely used in aromatherapy and folk medicine, and present in culinary herbs. Mediates the conversion of (2E)-geranyl diphosphate (GPP) into alpha fenchol, limonene and alpha-pinene and, as minor compounds, into beta-myrcene, alpha-terpinolene and alpha-phellandrene. The polypeptide is (-)-endo-fenchol synthase, chloroplastic (Lavandula pedunculata subsp. lusitanica (French lavender)).